The sequence spans 545 residues: Luciferin 4-monooxygenase (545 aa).

A Microbody targeting signal motif is present at residues 543 to 545; the sequence is SKL.

This sequence belongs to the ATP-dependent AMP-binding enzyme family. Mg(2+) serves as cofactor.

It is found in the peroxisome. The enzyme catalyses firefly D-luciferin + ATP + O2 = firefly oxyluciferin + hnu + AMP + CO2 + diphosphate. Produces green light with a wavelength of 562 nm. In Photuris pensylvanica (Pennsylania firefly), this protein is Luciferin 4-monooxygenase.